Here is a 368-residue protein sequence, read N- to C-terminus: Glutamate 5-kinase (368 aa).

Position 18 (Lys-18) interacts with ATP. Positions 58, 145, and 157 each coordinate substrate. ATP-binding positions include 177–178 (SD) and 218–224 (TGGMASK). A PUA domain is found at 280–358 (AGSLTLDEGA…SELPGELRRP (79 aa)).

This sequence belongs to the glutamate 5-kinase family.

It is found in the cytoplasm. It catalyses the reaction L-glutamate + ATP = L-glutamyl 5-phosphate + ADP. It participates in amino-acid biosynthesis; L-proline biosynthesis; L-glutamate 5-semialdehyde from L-glutamate: step 1/2. In terms of biological role, catalyzes the transfer of a phosphate group to glutamate to form L-glutamate 5-phosphate. The sequence is that of Glutamate 5-kinase from Mycobacterium ulcerans (strain Agy99).